The primary structure comprises 178 residues: Photosystem I assembly protein Ycf4 (178 aa).

Helical transmembrane passes span 19–39 (FLVA…SLSS) and 61–81 (LVMG…WYVI).

The protein belongs to the Ycf4 family.

It is found in the cellular thylakoid membrane. Functionally, seems to be required for the assembly of the photosystem I complex. In Synechococcus sp. (strain CC9902), this protein is Photosystem I assembly protein Ycf4.